The sequence spans 180 residues: Decaprenylphosphoryl-5-phosphoribose phosphatase (180 aa).

4 helical membrane passes run 31 to 51, 61 to 81, 116 to 136, and 139 to 159; these read ALSH…AGAL, LAVG…KRVV, VLLA…PMAL, and LVLG…GALV.

This sequence belongs to the PA-phosphatase related phosphoesterase family.

The protein localises to the cell membrane. The catalysed reaction is trans,octa-cis-decaprenylphospho-beta-D-ribofuranose 5-phosphate + H2O = trans,octa-cis-decaprenylphospho-beta-D-ribofuranose + phosphate. Its pathway is cell wall biogenesis; cell wall polysaccharide biosynthesis. Phosphatase involved in the biosynthesis of decaprenylphosphoryl arabinose (DPA), which serves as the arabinose donor for the biosynthesis of arabinogalactan, the major mycobacterial cell wall polysaccharide. Catalyzes the dephosphorylation of decaprenylphosphoryl-5-phosphoribose (DPPR) to decaprenyl-phosphoribose (DPR). The sequence is that of Decaprenylphosphoryl-5-phosphoribose phosphatase from Mycolicibacterium smegmatis (strain ATCC 700084 / mc(2)155) (Mycobacterium smegmatis).